The chain runs to 260 residues: NAD kinase (260 aa).

The active-site Proton acceptor is the Asp-54. NAD(+)-binding positions include 54 to 55 (DG), 123 to 124 (ND), Arg-150, Asp-152, and 163 to 168 (TAYSLS).

Belongs to the NAD kinase family. A divalent metal cation serves as cofactor.

Its subcellular location is the cytoplasm. It carries out the reaction NAD(+) + ATP = ADP + NADP(+) + H(+). Involved in the regulation of the intracellular balance of NAD and NADP, and is a key enzyme in the biosynthesis of NADP. Catalyzes specifically the phosphorylation on 2'-hydroxyl of the adenosine moiety of NAD to yield NADP. The protein is NAD kinase of Caldicellulosiruptor saccharolyticus (strain ATCC 43494 / DSM 8903 / Tp8T 6331).